Reading from the N-terminus, the 745-residue chain is MHWAKILGVGIGAAALLGLGIILGHFAIPKATEPLASSVSDSQDLDLAILDSVMGQLDASRIRENLRELSKEPHVATSARDEALVQLLLGRWKDSASGLDTAKTYEYTVLLSFPSTEQPNSVEVVGPNGTVFHSFQPFEKNLTGEQAEPNVLQPYAAYAPPGTPKGPLVYANRGSEDDFKKLEAEGINLKGTIALTRYGSVGRGAKAINAARHGVVGVLVYTDPGDINDGKSLPNETFPNSWGLPPSGVERGSYYEYFGDPLTPYLPAHPVSFRLDPHNISGFPPIPTQPIGFEDAKNLLCNLNGTSAPDSWQGALGCEYKLGPGFEPNGNFPAGSEVKVSVYNRLELRNSSNVLGIIQGAVEPDRYVIYGNHRDSWVHGAVDPSSGTAVLLEISRVLGTLLKKGTWRPRRSIIFASWGAEEFGLIGSTEFTEEFLSKLQERTVTYINVDISVFSNATLRAQGTPPVQSVIFSATKEISAPGSSGLSIYDNWIRYTNRSSPVYGLVPSMGTLGAGSDYASFIHFLGITSMDLAYTYDRSKTSARIYPTYHTAFDTFDYVEKFLDPGFSSHQAVARTAGSVLLRLSDSLFLPLNVSDYSETLQSFLQAAQENLGALLESHNISLGPLVTAVEKFKAAAAALNQHILTLQKSSPDPLQVRMVNDQLMLLERAFLNPRAFPEERYYSHVLWAPNTASVATFPGLANAYARAQEINSGAEAWAEVERQLSIAVMALEGAAATLQPVTDL.

Residues 1-6 (MHWAKI) are Cytoplasmic-facing. The helical; Signal-anchor for type II membrane protein transmembrane segment at 7 to 28 (LGVGIGAAALLGLGIILGHFAI) threads the bilayer. Residues 29–745 (PKATEPLASS…AATLQPVTDL (717 aa)) lie on the Extracellular side of the membrane. 3 N-linked (GlcNAc...) asparagine glycosylation sites follow: Asn128, Asn141, and Asn235. Residues Thr263 and Leu266 each coordinate Ca(2+). N-linked (GlcNAc...) asparagine glycans are attached at residues Asn279, Asn304, and Asn350. Cys301 and Cys318 are joined by a disulfide. Residues His373 and Asp383 each contribute to the Zn(2+) site. Glu421 functions as the Proton donor/acceptor in the catalytic mechanism. A Zn(2+)-binding site is contributed by Glu422. 2 residues coordinate Ca(2+): Glu430 and Glu433. Residue Asp450 participates in Zn(2+) binding. 2 N-linked (GlcNAc...) asparagine glycosylation sites follow: Asn456 and Asn497. Residue His550 coordinates Zn(2+). N-linked (GlcNAc...) asparagine glycans are attached at residues Asn593 and Asn620.

It belongs to the peptidase M28 family. M28B subfamily. Homodimer. Zn(2+) serves as cofactor. In terms of processing, N-glycosylated. As to expression, detected on apical villi on the brush border membrane of ileum enterocytes (at protein level). Mainly expressed in the distal small intestine.

Its subcellular location is the apical cell membrane. In terms of biological role, aminopeptidase with broad substrate specificity. Has lower activity with substrates that have Asp or Glu in the P2' position, or Pro in the P3' position. Lacks activity with substrates that have both Pro in the P3' position and Asp or Glu in the P2' position. Lacks carboxypeptidase activity. Lacks dipeptidyl-peptidase IV type activity. The protein is Aminopeptidase NAALADL1 (Naaladl1) of Rattus norvegicus (Rat).